The following is a 318-amino-acid chain: Serine protease 41 (318 aa).

Positions 1–19 (MGARGALLLALLLARAGLG) are cleaved as a signal peptide. A propeptide spanning residues 20–54 (KPGELGALQAGPGAARRPGGGGREEACGHREIHAL) is cleaved from the precursor. The region spanning 55-297 (VAGGVESARG…YFHWIRRVMS (243 aa)) is the Peptidase S1 domain. C80 and C96 are oxidised to a cystine. Active-site charge relay system residues include H95 and D147. 3 disulfide bridges follow: C181/C255, C215/C234, and C245/C273. N-linked (GlcNAc...) asparagine glycosylation is present at N211. S249 (charge relay system) is an active-site residue. N284 is a glycosylation site (N-linked (GlcNAc...) asparagine). The GPI-anchor amidated serine moiety is linked to residue S299. Positions 300-318 (TPRPNPSQLLLLLALLWAP) are cleaved as a propeptide — removed in mature form.

Belongs to the peptidase S1 family. N-glycosylated.

It is found in the cell membrane. In Homo sapiens (Human), this protein is Serine protease 41.